Here is a 512-residue protein sequence, read N- to C-terminus: Ribose import ATP-binding protein RbsA 2 (512 aa).

2 ABC transporter domains span residues 7-242 (LEIR…VGRE) and 257-498 (LGEP…SGIG). Residue 39 to 46 (GENGAGKS) participates in ATP binding.

The protein belongs to the ABC transporter superfamily. Ribose importer (TC 3.A.1.2.1) family. As to quaternary structure, the complex is composed of an ATP-binding protein (RbsA), two transmembrane proteins (RbsC) and a solute-binding protein (RbsB).

The protein localises to the cell inner membrane. It carries out the reaction D-ribose(out) + ATP + H2O = D-ribose(in) + ADP + phosphate + H(+). Part of the ABC transporter complex RbsABC involved in ribose import. Responsible for energy coupling to the transport system. The protein is Ribose import ATP-binding protein RbsA 2 of Rhizobium meliloti (strain 1021) (Ensifer meliloti).